The primary structure comprises 621 residues: DNA-directed RNA polymerase subunit gamma (621 aa).

Mg(2+) is bound by residues aspartate 463, aspartate 465, and aspartate 467.

This sequence belongs to the RNA polymerase beta' chain family. RpoC1 subfamily. In cyanobacteria the RNAP catalytic core is composed of 2 alpha, 1 beta, 1 beta', 1 gamma and 1 omega subunit. When a sigma factor is associated with the core the holoenzyme is formed, which can initiate transcription. Mg(2+) serves as cofactor.

It catalyses the reaction RNA(n) + a ribonucleoside 5'-triphosphate = RNA(n+1) + diphosphate. Functionally, DNA-dependent RNA polymerase catalyzes the transcription of DNA into RNA using the four ribonucleoside triphosphates as substrates. In Nostoc commune, this protein is DNA-directed RNA polymerase subunit gamma.